The chain runs to 658 residues: Threonine--tRNA ligase (658 aa).

The TGS domain occupies 1 to 61 (MIELVFPDGS…EKGGAFKILT (61 aa)). Residues 243-535 (DHRKLGRQMD…LIENYAGAFP (293 aa)) form a catalytic region. The Zn(2+) site is built by C335, H386, and H512.

Belongs to the class-II aminoacyl-tRNA synthetase family. As to quaternary structure, homodimer. Zn(2+) serves as cofactor.

The protein resides in the cytoplasm. It catalyses the reaction tRNA(Thr) + L-threonine + ATP = L-threonyl-tRNA(Thr) + AMP + diphosphate + H(+). Catalyzes the attachment of threonine to tRNA(Thr) in a two-step reaction: L-threonine is first activated by ATP to form Thr-AMP and then transferred to the acceptor end of tRNA(Thr). Also edits incorrectly charged L-seryl-tRNA(Thr). This Phenylobacterium zucineum (strain HLK1) protein is Threonine--tRNA ligase.